We begin with the raw amino-acid sequence, 410 residues long: Calsequestrin-2 (410 aa).

Positions 1–19 (MKRTHLFIAGLYLLASCRA) are cleaved as a signal peptide. Residues 221–242 (MDEPIAIPDKPYTEEELVEFVK) form a calcium regulated hydrophobic site region. The residue at position 282 (tyrosine 282) is a Phosphotyrosine. Residues asparagine 335 and asparagine 395 are each glycosylated (N-linked (GlcNAc...) asparagine). A disordered region spans residues 364–410 (DVLSGKINTEDDDNEEGDDGDDDEDDDDDDGNNSDEESNDDSDDDDE). Acidic residues predominate over residues 373 to 410 (EDDDNEEGDDGDDDEDDDDDDGNNSDEESNDDSDDDDE). Phosphoserine; by CK2 occurs at positions 397, 401, and 405.

It belongs to the calsequestrin family. As to quaternary structure, interacts with ASPH. Monomer, homodimer and homooligomer. Mostly monomeric in the absence of calcium. Forms higher oligomers in a calcium-dependent manner. Dimers associate to form tetramers, that then form linear homomer chains. Interacts with TRDN. Post-translationally, phosphorylation in the C-terminus, probably by CK2, moderately increases calcium buffering capacity. N-glycosylated. In terms of tissue distribution, detected in heart muscle (at protein level).

It localises to the sarcoplasmic reticulum lumen. In terms of biological role, calsequestrin is a high-capacity, moderate affinity, calcium-binding protein and thus acts as an internal calcium store in muscle. Calcium ions are bound by clusters of acidic residues at the protein surface, especially at the interface between subunits. Can bind around 60 Ca(2+) ions. Regulates the release of lumenal Ca(2+) via the calcium release channel RYR2; this plays an important role in triggering muscle contraction. Plays a role in excitation-contraction coupling in the heart and in regulating the rate of heart beats. This chain is Calsequestrin-2 (CASQ2), found in Canis lupus familiaris (Dog).